The sequence spans 202 residues: Small ribosomal subunit protein uS5 (202 aa).

The segment covering 1-13 (MPGQQRRGGGSGG) has biased composition (gly residues). The segment at 1–31 (MPGQQRRGGGSGGSDRRERRDRSGGGPAQEK) is disordered. Positions 14–23 (SDRRERRDRS) are enriched in basic and acidic residues. Residues 34–97 (YVERVVAINR…EEAKKHFFKV (64 aa)) enclose the S5 DRBM domain.

Belongs to the universal ribosomal protein uS5 family. In terms of assembly, part of the 30S ribosomal subunit. Contacts proteins S4 and S8.

With S4 and S12 plays an important role in translational accuracy. In terms of biological role, located at the back of the 30S subunit body where it stabilizes the conformation of the head with respect to the body. This Frankia alni (strain DSM 45986 / CECT 9034 / ACN14a) protein is Small ribosomal subunit protein uS5.